The primary structure comprises 115 residues: Large ribosomal subunit protein bL19 (115 aa).

The protein belongs to the bacterial ribosomal protein bL19 family.

Its function is as follows. This protein is located at the 30S-50S ribosomal subunit interface and may play a role in the structure and function of the aminoacyl-tRNA binding site. The sequence is that of Large ribosomal subunit protein bL19 from Yersinia pseudotuberculosis serotype O:1b (strain IP 31758).